The sequence spans 223 residues: F420-dependent NADP reductase (223 aa).

Residues 9–12 (TGDQ), 30–31 (SR), K35, L75, and V101 each bind NADP(+).

This sequence belongs to the F420-dependent NADP reductase family.

It carries out the reaction reduced coenzyme F420-(gamma-L-Glu)(n) + NADP(+) = oxidized coenzyme F420-(gamma-L-Glu)(n) + NADPH + 2 H(+). Its function is as follows. Catalyzes the reduction of NADP(+) with F420H(2) via hydride transfer, and the reverse reaction, i.e. the reduction of F420 with NADPH. Probably functions in the regeneration of NADPH required in biosynthetic reactions. The protein is F420-dependent NADP reductase (fno) of Methanocaldococcus jannaschii (strain ATCC 43067 / DSM 2661 / JAL-1 / JCM 10045 / NBRC 100440) (Methanococcus jannaschii).